Here is a 377-residue protein sequence, read N- to C-terminus: Lactosylceramide 1,3-N-acetyl-beta-D-glucosaminyltransferase B (377 aa).

Residues 1–13 are Cytoplasmic-facing; sequence MLISARRLRRCQS. The chain crosses the membrane as a helical; Signal-anchor for type II membrane protein span at residues 14-30; sequence LQLLASCFVLSLMALLV. The Lumenal segment spans residues 31 to 377; the sequence is QEDNSLVNHV…DTYPCSAAWS (347 aa). N56, N167, and N275 each carry an N-linked (GlcNAc...) asparagine glycan.

Belongs to the glycosyltransferase 31 family.

The protein localises to the golgi apparatus membrane. It carries out the reaction a beta-D-Gal-(1-&gt;4)-beta-D-Glc-(1&lt;-&gt;1)-Cer(d18:1(4E)) + UDP-N-acetyl-alpha-D-glucosamine = a beta-D-GlcNAc-(1-&gt;3)-beta-D-Gal-(1-&gt;4)-beta-D-Glc-(1&lt;-&gt;1)-Cer(d18:1(4E)) + UDP + H(+). The catalysed reaction is a neolactoside nLc4Cer(d18:1(4E)) + UDP-N-acetyl-alpha-D-glucosamine = a neolactoside IV(3)-beta-GlcNAc-nLc4Cer(d18:1(4E)) + UDP + H(+). It functions in the pathway protein modification; protein glycosylation. Its function is as follows. Beta-1,3-N-acetylglucosaminyltransferase that plays a key role in the synthesis of lacto- or neolacto-series carbohydrate chains on glycolipids. This Xenopus laevis (African clawed frog) protein is Lactosylceramide 1,3-N-acetyl-beta-D-glucosaminyltransferase B (b3gnt5-b).